The sequence spans 57 residues: uncharacterized protein (57 aa).

The chain crosses the membrane as a helical span at residues L24–I44.

To cation A.eutrophus efflux system protein CzcD.

Its subcellular location is the cell membrane. This is an uncharacterized protein from Bacillus caldolyticus.